The following is a 117-amino-acid chain: G antigen 12H (117 aa).

Positions 1–117 (MSWRGRSTYY…PEEGEKQSQC (117 aa)) are disordered. Acidic residues-rich tracts occupy residues 32–45 (FSDE…EEGE) and 87–96 (ECEDGPDGQE). Basic and acidic residues predominate over residues 103–117 (EEVKTPEEGEKQSQC).

It belongs to the GAGE family.

This Homo sapiens (Human) protein is G antigen 12H (GAGE12H).